Here is a 265-residue protein sequence, read N- to C-terminus: Capsule polysaccharide export inner-membrane protein BexB (265 aa).

Helical transmembrane passes span 37 to 57 (IGFF…VMMW), 64 to 84 (KFST…AMMW), 118 to 138 (LLEV…LVMI), 151 to 171 (LIAW…ICAI), 178 to 198 (FGKI…AFFF), and 235 to 255 (ESIG…LVMV). An ABC transmembrane type-2 domain is found at 37 to 258 (IGFFWLFVEP…LLGLVMVKNF (222 aa)).

This sequence belongs to the ABC-2 integral membrane protein family.

It is found in the cell inner membrane. May form an ATP-driven capsule polysaccharide export apparatus, in association with the BexA, BexC and BexD proteins. This Haemophilus influenzae protein is Capsule polysaccharide export inner-membrane protein BexB (bexB).